Here is a 484-residue protein sequence, read N- to C-terminus: tRNA sulfurtransferase (484 aa).

Positions 63 to 167 (ANLILLLSST…NEKLFFIDKK (105 aa)) constitute a THUMP domain. ATP contacts are provided by residues 185–186 (LI), K267, G289, and Q298. A disulfide bridge links C346 with C458. Positions 406–484 (FAENEIVLDI…GFDNVKVYRP (79 aa)) constitute a Rhodanese domain. The active-site Cysteine persulfide intermediate is the C458.

It belongs to the ThiI family.

The protein resides in the cytoplasm. The enzyme catalyses [ThiI sulfur-carrier protein]-S-sulfanyl-L-cysteine + a uridine in tRNA + 2 reduced [2Fe-2S]-[ferredoxin] + ATP + H(+) = [ThiI sulfur-carrier protein]-L-cysteine + a 4-thiouridine in tRNA + 2 oxidized [2Fe-2S]-[ferredoxin] + AMP + diphosphate. The catalysed reaction is [ThiS sulfur-carrier protein]-C-terminal Gly-Gly-AMP + S-sulfanyl-L-cysteinyl-[cysteine desulfurase] + AH2 = [ThiS sulfur-carrier protein]-C-terminal-Gly-aminoethanethioate + L-cysteinyl-[cysteine desulfurase] + A + AMP + 2 H(+). It participates in cofactor biosynthesis; thiamine diphosphate biosynthesis. Functionally, catalyzes the ATP-dependent transfer of a sulfur to tRNA to produce 4-thiouridine in position 8 of tRNAs, which functions as a near-UV photosensor. Also catalyzes the transfer of sulfur to the sulfur carrier protein ThiS, forming ThiS-thiocarboxylate. This is a step in the synthesis of thiazole, in the thiamine biosynthesis pathway. The sulfur is donated as persulfide by IscS. The chain is tRNA sulfurtransferase from Psychromonas ingrahamii (strain DSM 17664 / CCUG 51855 / 37).